The sequence spans 357 residues: NADH-quinone oxidoreductase subunit H (357 aa).

Transmembrane regions (helical) follow at residues 20 to 40 (WLVVWTIIKIVIIAVPIILCV), 92 to 112 (ILFIVAPVVTLMPALAAWAVV), 127 to 147 (LLYVMAITSIGVYGVIVAGWA), 165 to 185 (VSYELAISFVLVTVLLVSGSL), 206 to 226 (FLSWNWLPLLPLFVIYVISAV), 268 to 288 (ILLSAMASIMFLGGWMSPIDI), 294 to 314 (IPGWIWLGIKTFFVVSLFIWF), and 329 to 349 (LGWKIFIPLTGVWLVVVAIWM).

This sequence belongs to the complex I subunit 1 family. In terms of assembly, NDH-1 is composed of 14 different subunits. Subunits NuoA, H, J, K, L, M, N constitute the membrane sector of the complex.

The protein localises to the cell inner membrane. It carries out the reaction a quinone + NADH + 5 H(+)(in) = a quinol + NAD(+) + 4 H(+)(out). NDH-1 shuttles electrons from NADH, via FMN and iron-sulfur (Fe-S) centers, to quinones in the respiratory chain. The immediate electron acceptor for the enzyme in this species is believed to be ubiquinone. Couples the redox reaction to proton translocation (for every two electrons transferred, four hydrogen ions are translocated across the cytoplasmic membrane), and thus conserves the redox energy in a proton gradient. This subunit may bind ubiquinone. This Bordetella avium (strain 197N) protein is NADH-quinone oxidoreductase subunit H.